A 425-amino-acid chain; its full sequence is Podosporapepsin (425 aa).

Residues 1-28 (MVSLTDLFLASLLVPTSPWLCLPPRIDT) form the signal peptide. The propeptide at 29–91 (IDQRGGRVTL…QEEAFARIKR (63 aa)) is activation peptide. A Peptidase A1 domain is found at 108–419 (YVTPVTIGTP…GTNPPRIGFA (312 aa)). The active site involves Asp126. Asn184 and Asn273 each carry an N-linked (GlcNAc...) asparagine glycan. Asp310 is a catalytic residue. Cys346 and Cys381 are joined by a disulfide. N-linked (GlcNAc...) asparagine glycosylation occurs at Asn370.

The protein belongs to the peptidase A1 family.

The chain is Podosporapepsin (PAPA) from Podospora anserina (Pleurage anserina).